The following is a 406-amino-acid chain: S-adenosylmethionine synthase (406 aa).

Residue His-5 coordinates ATP. Asp-7 contributes to the Mg(2+) binding site. Position 33 (Glu-33) interacts with K(+). Glu-46 and Gln-89 together coordinate L-methionine. Positions 89-99 (QSPDIAQGVDT) are flexible loop. Residues 164-166 (DGK), 240-241 (KF), Asp-249, 255-256 (RK), Ala-272, and Lys-276 each bind ATP. Residue Asp-249 coordinates L-methionine. Lys-280 is a binding site for L-methionine.

It belongs to the AdoMet synthase family. As to quaternary structure, homotetramer; dimer of dimers. Mg(2+) is required as a cofactor. It depends on K(+) as a cofactor.

Its subcellular location is the cytoplasm. It carries out the reaction L-methionine + ATP + H2O = S-adenosyl-L-methionine + phosphate + diphosphate. It participates in amino-acid biosynthesis; S-adenosyl-L-methionine biosynthesis; S-adenosyl-L-methionine from L-methionine: step 1/1. In terms of biological role, catalyzes the formation of S-adenosylmethionine (AdoMet) from methionine and ATP. The overall synthetic reaction is composed of two sequential steps, AdoMet formation and the subsequent tripolyphosphate hydrolysis which occurs prior to release of AdoMet from the enzyme. The polypeptide is S-adenosylmethionine synthase (Synechococcus sp. (strain ATCC 27144 / PCC 6301 / SAUG 1402/1) (Anacystis nidulans)).